The sequence spans 300 residues: Tyrosine recombinase XerC (300 aa).

The 87-residue stretch at 2–88 (IQEGKLEQQF…SLRSFYTFLL (87 aa)) folds into the Core-binding (CB) domain. One can recognise a Tyr recombinase domain in the interval 109–294 (RLPKFFYSEE…TKEHLKSTYM (186 aa)). Catalysis depends on residues arginine 150, lysine 174, histidine 246, arginine 249, and histidine 272. The active-site O-(3'-phospho-DNA)-tyrosine intermediate is the tyrosine 281.

Belongs to the 'phage' integrase family. XerC subfamily. In terms of assembly, forms a cyclic heterotetrameric complex composed of two molecules of XerC and two molecules of XerD.

The protein resides in the cytoplasm. Site-specific tyrosine recombinase, which acts by catalyzing the cutting and rejoining of the recombining DNA molecules. The XerC-XerD complex is essential to convert dimers of the bacterial chromosome into monomers to permit their segregation at cell division. It also contributes to the segregational stability of plasmids. The protein is Tyrosine recombinase XerC of Listeria monocytogenes serovar 1/2a (strain ATCC BAA-679 / EGD-e).